A 75-amino-acid chain; its full sequence is Small ribosomal subunit protein bS18 (75 aa).

It belongs to the bacterial ribosomal protein bS18 family. In terms of assembly, part of the 30S ribosomal subunit. Forms a tight heterodimer with protein bS6.

In terms of biological role, binds as a heterodimer with protein bS6 to the central domain of the 16S rRNA, where it helps stabilize the platform of the 30S subunit. This is Small ribosomal subunit protein bS18 from Methylobacillus flagellatus (strain ATCC 51484 / DSM 6875 / VKM B-1610 / KT).